The primary structure comprises 400 residues: Nicotinate phosphoribosyltransferase (400 aa).

Residue His220 is modified to Phosphohistidine; by autocatalysis.

Belongs to the NAPRTase family. Transiently phosphorylated on a His residue during the reaction cycle. Phosphorylation strongly increases the affinity for substrates and increases the rate of nicotinate D-ribonucleotide production. Dephosphorylation regenerates the low-affinity form of the enzyme, leading to product release.

The enzyme catalyses nicotinate + 5-phospho-alpha-D-ribose 1-diphosphate + ATP + H2O = nicotinate beta-D-ribonucleotide + ADP + phosphate + diphosphate. The protein operates within cofactor biosynthesis; NAD(+) biosynthesis; nicotinate D-ribonucleotide from nicotinate: step 1/1. Catalyzes the synthesis of beta-nicotinate D-ribonucleotide from nicotinate and 5-phospho-D-ribose 1-phosphate at the expense of ATP. In Escherichia coli (strain K12 / MC4100 / BW2952), this protein is Nicotinate phosphoribosyltransferase.